Consider the following 2130-residue polypeptide: COPII coat assembly protein SEC16 (2130 aa).

Composition is skewed to basic and acidic residues over residues 27 to 38 (KILEKEPEHEPS), 50 to 72 (DDVK…KDDL), and 88 to 97 (EAIKKNKLDP). Disordered stretches follow at residues 27–516 (KILE…TQNK), 532–585 (FLED…NDAY), 598–647 (PAAR…ATMS), 810–842 (QGAQ…SSLI), 1347–1366 (DESK…SPAV), 1374–1519 (DITS…NNGS), 1558–1731 (PSIS…TPSD), 1753–1997 (DTET…LGEK), and 2014–2130 (IPLE…LDQK). The span at 98–120 (QDQTAAGDSGRSQPDLSPRTTTG) shows a compositional bias: polar residues. Composition is skewed to basic and acidic residues over residues 128 to 138 (ETKDTDGHDSA), 149 to 170 (DDNR…KSEL), 178 to 188 (EADKEETKDFD), and 199 to 216 (KAGK…EAKI). 2 stretches are compositionally biased toward polar residues: residues 267 to 279 (WESN…SSQA) and 293 to 335 (APSS…PSSQ). The span at 380–395 (DFLKEIQKQEESKDTD) shows a compositional bias: basic and acidic residues. Residues 405–420 (TPSAQPSSQDQDTSQD) are compositionally biased toward low complexity. Residues 421-431 (MRNYSTTQTDI) show a composition bias toward polar residues. Basic and acidic residues-rich tracts occupy residues 447-481 (PKGE…HDFL) and 504-513 (ENKDSDKFET). The span at 538–568 (TSQTQTLKSKSNKQTYLPSTTNPSTTPVVPT) shows a compositional bias: low complexity. Positions 601–617 (RSTNKYAPGSSNHNSPP) are enriched in polar residues. Polar residues-rich tracts occupy residues 1374–1388 (DITS…TSPQ), 1399–1420 (VTTN…NGMS), 1428–1498 (LYSN…QSEN), 1505–1519 (YSAN…NNGS), and 1559–1574 (SISN…SNPI). Basic and acidic residues predominate over residues 1627 to 1640 (TESRESEKSSELRD). 2 stretches are compositionally biased toward polar residues: residues 1701–1714 (SGGN…SSDK) and 1722–1731 (TSMLVDTPSD). Residues 1753-1779 (DTETLHDRNEVKEAPNQESIDTKEEAS) are compositionally biased toward basic and acidic residues. Polar residues-rich tracts occupy residues 1793 to 1803 (ASTSQSRNINV) and 1819 to 1839 (TSSL…NSFR). Over residues 1840–1857 (TNEKESMFHPYQEGENKS) the composition is skewed to basic and acidic residues. Positions 1896 to 1911 (SSRLSQSQQSALYQQY) are enriched in low complexity. Residues 1925–1935 (VDEEEDEDSED) are compositionally biased toward acidic residues. 2 stretches are compositionally biased toward basic and acidic residues: residues 1936 to 1963 (ESSK…KQRQ) and 1981 to 1997 (RKND…LGEK). Composition is skewed to low complexity over residues 2039-2050 (SSSSISKPSSSS), 2061-2083 (APPA…RPSQ), and 2092-2104 (PSLA…DLLS).

The protein belongs to the SEC16 family.

The protein resides in the endoplasmic reticulum membrane. In terms of biological role, involved in the initiation of assembly of the COPII coat required for the formation of transport vesicles from the endoplasmic reticulum (ER) and the selection of cargo molecules. Also involved in autophagy. This is COPII coat assembly protein SEC16 (SEC16) from Debaryomyces hansenii (strain ATCC 36239 / CBS 767 / BCRC 21394 / JCM 1990 / NBRC 0083 / IGC 2968) (Yeast).